Reading from the N-terminus, the 280-residue chain is 23S rRNA (guanine(748)-N(1))-methyltransferase (280 aa).

4 residues coordinate Zn(2+): C11, C14, C27, and H31. S-adenosyl-L-methionine contacts are provided by residues Y70, 100-101 (TG), and H188.

It belongs to the methyltransferase superfamily. RlmA family.

It carries out the reaction guanosine(748) in 23S rRNA + S-adenosyl-L-methionine = N(1)-methylguanosine(748) in 23S rRNA + S-adenosyl-L-homocysteine + H(+). In terms of biological role, specifically methylates the guanosine in position 748 of 23S rRNA. Confers resistance to the macrolide antibiotic tylosine. This Streptomyces fradiae (Streptomyces roseoflavus) protein is 23S rRNA (guanine(748)-N(1))-methyltransferase (rlmAII).